The following is a 656-amino-acid chain: Threonine--tRNA ligase (656 aa).

Residues leucine 2 to threonine 67 form the TGS domain. The interval aspartate 251–proline 542 is catalytic. 3 residues coordinate Zn(2+): cysteine 342, histidine 393, and histidine 519.

Belongs to the class-II aminoacyl-tRNA synthetase family. As to quaternary structure, homodimer. Zn(2+) serves as cofactor.

The protein localises to the cytoplasm. The enzyme catalyses tRNA(Thr) + L-threonine + ATP = L-threonyl-tRNA(Thr) + AMP + diphosphate + H(+). In terms of biological role, catalyzes the attachment of threonine to tRNA(Thr) in a two-step reaction: L-threonine is first activated by ATP to form Thr-AMP and then transferred to the acceptor end of tRNA(Thr). Also edits incorrectly charged L-seryl-tRNA(Thr). The chain is Threonine--tRNA ligase from Bdellovibrio bacteriovorus (strain ATCC 15356 / DSM 50701 / NCIMB 9529 / HD100).